Here is a 165-residue protein sequence, read N- to C-terminus: Leukotoxin-activating lysine-acyltransferase LktC (165 aa).

Catalysis depends on residues histidine 22 and aspartate 91.

It belongs to the RTX toxin acyltransferase family.

It localises to the cytoplasm. It catalyses the reaction a fatty acyl-[ACP] + L-lysyl-[protein] = N(6)-(fatty acyl)-L-lysyl-[protein] + holo-[ACP] + H(+). Its function is as follows. Involved in fatty acylation of the protoxin (LktA) at two internal lysine residues, thereby converting it to the active toxin. This is Leukotoxin-activating lysine-acyltransferase LktC (lktC) from Pasteurella haemolytica-like sp. (strain 5943B).